The primary structure comprises 732 residues: MNDVQSQPLTLYIACPRGLEGLLADELADFGAEVTGTTVAGVHAQADTAMAYRICLWSRLANRVVLCLLREQGIERPEALVEAARRVDWGAHLRAGSSLAVDFHGQSEHIRHTRFGAQSVKDGIVDAMRAAGRERPAVDLKTPDARIYAHLHRGRLLLGLDLVGGSLHQRGYRRDAGHAPLKENLAAALLMRADWPARARRGEPLVDPLCGAGTLLIEAALMAADIAPQLSRDYFAFEAWVGHDPDAWRELQREAQARANVGRRRVKSKLYGRDQSPPAIAAAKANAMRAGIPALIDLQGAEVAQLTRPEGVDGPGLVITNPPYGERLGELPEVVPIYTALGERLRAEFEGWQLALFTGNPDLGHRTGLRAEKQYAFKNGPLDCKLLLIPVVAQRTERETSSEGDEPQGASGATSRPGPRNDGAQMFANRLEKNRKRLKKWLKQSGERCYRLYDADMPEYALAVDVYGDRVHVQEYAPPRSVDPRQAQRRLLDALEVIPQVLGVRPESVHYKQRTRQAGKAQYAKQDASGERFEVSEGPARLWVNLRDYLDTGLFLDHRPVRRRLREMADGKRFLNLFCYTGTATVQAALGGASDSVSVDLSNTYLAWARDNFALNRLDPSRHRVVRDDCLRWLETAGSEFDLIFMDPPTFSNSKKMDAVLDVQRDHARLIELAMARLAPGGTLVFSNNQRRFVLDAAVGERFAVEDISARTFDPDFSRRPDLHHCFLIRHR.

The THUMP domain occupies Met-50 to Leu-162. The segment at Thr-396 to Ala-424 is disordered.

Belongs to the methyltransferase superfamily. RlmKL family.

It is found in the cytoplasm. It carries out the reaction guanosine(2445) in 23S rRNA + S-adenosyl-L-methionine = N(2)-methylguanosine(2445) in 23S rRNA + S-adenosyl-L-homocysteine + H(+). The catalysed reaction is guanosine(2069) in 23S rRNA + S-adenosyl-L-methionine = N(2)-methylguanosine(2069) in 23S rRNA + S-adenosyl-L-homocysteine + H(+). In terms of biological role, specifically methylates the guanine in position 2445 (m2G2445) and the guanine in position 2069 (m7G2069) of 23S rRNA. This chain is Ribosomal RNA large subunit methyltransferase K/L, found in Chromohalobacter salexigens (strain ATCC BAA-138 / DSM 3043 / CIP 106854 / NCIMB 13768 / 1H11).